A 257-amino-acid chain; its full sequence is Aspartate/glutamate leucyltransferase (257 aa).

It belongs to the R-transferase family. Bpt subfamily.

The protein resides in the cytoplasm. It catalyses the reaction N-terminal L-glutamyl-[protein] + L-leucyl-tRNA(Leu) = N-terminal L-leucyl-L-glutamyl-[protein] + tRNA(Leu) + H(+). It carries out the reaction N-terminal L-aspartyl-[protein] + L-leucyl-tRNA(Leu) = N-terminal L-leucyl-L-aspartyl-[protein] + tRNA(Leu) + H(+). Functions in the N-end rule pathway of protein degradation where it conjugates Leu from its aminoacyl-tRNA to the N-termini of proteins containing an N-terminal aspartate or glutamate. This is Aspartate/glutamate leucyltransferase from Rhodopseudomonas palustris (strain BisB5).